A 432-amino-acid polypeptide reads, in one-letter code: N-acylneuraminate cytidylyltransferase (432 aa).

The residue at position 1 (Met1) is an N-acetylmethionine. Residues 1-38 (MDALEKGAVTSGPAPRGRPSRGRPPKLQRSRGAGRGLE) form a disordered region. Residues 15-31 (PRGRPSRGRPPKLQRSR) carry the BC1 motif motif. A compositionally biased stretch (basic residues) spans 18–29 (RPSRGRPPKLQR). An omega-N-methylarginine mark is found at Arg35 and Arg50. 6 residues coordinate substrate: Arg50, Asn60, Arg109, Ser118, Ser120, and Gln141. The BC2 motif motif lies at 198–204 (KRPRRQD). Residue Arg199 is part of the active site. Positions 267-274 (KEKLKEIK) match the BC3 motif motif.

Belongs to the CMP-NeuNAc synthase family. In terms of assembly, homotetramer; the active enzyme is formed by a dimer of dimers. In terms of tissue distribution, highly expressed in brain and heart, and at intermediate level muscle and liver.

The protein resides in the nucleus. It catalyses the reaction an N-acylneuraminate + CTP = a CMP-N-acyl-beta-neuraminate + diphosphate. It functions in the pathway amino-sugar metabolism; N-acetylneuraminate metabolism. In terms of biological role, catalyzes the activation of N-acetylneuraminic acid (NeuNAc) to cytidine 5'-monophosphate N-acetylneuraminic acid (CMP-NeuNAc), a substrate required for the addition of sialic acid. Has some activity toward NeuNAc, N-glycolylneuraminic acid (Neu5Gc) or 2-keto-3-deoxy-D-glycero-D-galacto-nononic acid (KDN). In Mus musculus (Mouse), this protein is N-acylneuraminate cytidylyltransferase (Cmas).